The chain runs to 94 residues: MRIKPLGNRVVIKRLEAEEKTKSGIVLTGSAKEVPQEAEVVAVGPGSIVDGTKIEMEVKVGDKVLYSKYSGTEVKLDGEEYMILKQDDILAIVE.

Belongs to the GroES chaperonin family. In terms of assembly, heptamer of 7 subunits arranged in a ring. Interacts with the chaperonin GroEL.

The protein resides in the cytoplasm. In terms of biological role, together with the chaperonin GroEL, plays an essential role in assisting protein folding. The GroEL-GroES system forms a nano-cage that allows encapsulation of the non-native substrate proteins and provides a physical environment optimized to promote and accelerate protein folding. GroES binds to the apical surface of the GroEL ring, thereby capping the opening of the GroEL channel. The chain is Co-chaperonin GroES from Clostridium botulinum (strain Alaska E43 / Type E3).